Here is a 267-residue protein sequence, read N- to C-terminus: Probable ribosomal RNA small subunit methyltransferase A (267 aa).

L12, G37, E58, D83, and N100 together coordinate S-adenosyl-L-methionine.

It belongs to the class I-like SAM-binding methyltransferase superfamily. rRNA adenine N(6)-methyltransferase family. RsmA subfamily.

Its subcellular location is the cytoplasm. In terms of biological role, specifically dimethylates two adjacent adenosines in the loop of a conserved hairpin near the 3'-end of 16S rRNA in the 30S particle. May play a critical role in biogenesis of 30S subunits. The protein is Probable ribosomal RNA small subunit methyltransferase A of Methanococcus maripaludis (strain DSM 14266 / JCM 13030 / NBRC 101832 / S2 / LL).